A 345-amino-acid polypeptide reads, in one-letter code: Major capsid protein (345 aa).

2 intercapsomeric interactions regions span residues 11–25 and 152–156; these read GTNQ…GDKL and YNENI.

It belongs to the T7virus major capsid protein family. As to quaternary structure, homohexamer. Interacts with the connector protein and the minor capsid protein. Interacts with the capsid assembly scaffolding protein; capsid proteins and scaffolding proteins form building blocks that assemble to form the procapsid, each hexamer of the major capsid protein interacting with 2 scaffolding proteins.

It localises to the virion. In terms of biological role, assembles with the minor capsid protein to form an icosahedral capsid with a T=7 symmetry, about 60 nm in diameter, and consisting of 415 capsid proteins. The major and minor capsid proteins are incorporated into the capsid in about a 90/10 ratio respectively. Once the capsid is formed, encapsidates one single copy of the viral genome. In Escherichia coli (Bacteriophage T7), this protein is Major capsid protein.